Here is a 485-residue protein sequence, read N- to C-terminus: Noelin (485 aa).

Residues 1 to 24 form the signal peptide; sequence MSVPLLKIGVVLSTMAMITNWMSQ. N-linked (GlcNAc...) asparagine glycans are attached at residues Asn33, Asn103, Asn187, Asn288, Asn307, Asn394, Asn431, and Asn473. Residues 87–225 are a coiled coil; sequence RDARTKQLRQ…ERLRACMQKL (139 aa). In terms of domain architecture, Olfactomedin-like spans 226–478; the sequence is ACGKLTGISD…QTLYNVTLFH (253 aa). Cys227 and Cys409 are disulfide-bonded.

As to quaternary structure, homotetramer; disulfide-linked. Dimer of dimers, giving rise to a V-shaped homotretramer. Isoform 1 and isoform 3 interact with RTN4R. Identified in a complex with RTN4R and LINGO1. Peripherally associated with AMPAR complex. AMPAR complex consists of an inner core made of 4 pore-forming GluA/GRIA proteins (GRIA1, GRIA2, GRIA3 and GRIA4) and 4 major auxiliary subunits arranged in a twofold symmetry. One of the two pairs of distinct binding sites is occupied either by CNIH2, CNIH3 or CACNG2, CACNG3. The other harbors CACNG2, CACNG3, CACNG4, CACNG8 or GSG1L. This inner core of AMPAR complex is complemented by outer core constituents binding directly to the GluA/GRIA proteins at sites distinct from the interaction sites of the inner core constituents. Outer core constituents include at least PRRT1, PRRT2, CKAMP44/SHISA9, FRRS1L and NRN1. The proteins of the inner and outer core serve as a platform for other, more peripherally associated AMPAR constituents, including OLFM1. Alone or in combination, these auxiliary subunits control the gating and pharmacology of the AMPAR complex and profoundly impact their biogenesis and protein processing. Interacts with OLFM2. Post-translationally, in isoform 3 and isoform 4, the signal peptide is predicted to end in position 17. As to expression, expressed in the brain (at protein level). Expressed in the brain, predominantly in the cortex and hippocampus. In the pituitary only the two A-type and in the adrenal glands only the two B-type forms were detected.

The protein localises to the secreted. It localises to the synapse. The protein resides in the endoplasmic reticulum. Its subcellular location is the cell projection. It is found in the axon. The protein localises to the perikaryon. Contributes to the regulation of axonal growth in the embryonic and adult central nervous system by inhibiting interactions between RTN4R and LINGO1. Inhibits RTN4R-mediated axon growth cone collapse. May play an important role in regulating the production of neural crest cells by the neural tube. May be required for normal responses to olfactory stimuli. The sequence is that of Noelin (Olfm1) from Rattus norvegicus (Rat).